Reading from the N-terminus, the 637-residue chain is Threonine--tRNA ligase (637 aa).

One can recognise a TGS domain in the interval 1–61; sequence MPVITLPNGS…EQDAALSIVT (61 aa). The interval 242–533 is catalytic; the sequence is DHRKLGKKFD…LIENYEGAFP (292 aa). Zn(2+) contacts are provided by Cys333, His384, and His510.

The protein belongs to the class-II aminoacyl-tRNA synthetase family. In terms of assembly, homodimer. Zn(2+) is required as a cofactor.

It localises to the cytoplasm. The catalysed reaction is tRNA(Thr) + L-threonine + ATP = L-threonyl-tRNA(Thr) + AMP + diphosphate + H(+). In terms of biological role, catalyzes the attachment of threonine to tRNA(Thr) in a two-step reaction: L-threonine is first activated by ATP to form Thr-AMP and then transferred to the acceptor end of tRNA(Thr). Also edits incorrectly charged L-seryl-tRNA(Thr). This Teredinibacter turnerae (strain ATCC 39867 / T7901) protein is Threonine--tRNA ligase.